A 176-amino-acid polypeptide reads, in one-letter code: Vitamin K epoxide reductase complex subunit 1-like protein 1 (176 aa).

The Cytoplasmic segment spans residues 1-13 (MAAPVLLRVSVPR). The helical transmembrane segment at 14-36 (WERVARYAVCAAGILLSIYAYHV) threads the bilayer. Residues 37–87 (EREKERDPEHRALCDLGPWVKCSAALASRWGRGFGLLGSIFGKDGVLNQPN) lie on the Lumenal side of the membrane. A disulfide bridge connects residues Cys-50 and Cys-58. Asn-87 lines the (S)-warfarin pocket. Residues 88-102 (SVFGLIFYILQLLLG) form a helical membrane-spanning segment. Residues 103 to 107 (MTASA) are Cytoplasmic-facing. The chain crosses the membrane as a helical span at residues 108–135 (VAALILMTSSIMSVVGSLYLAYILYFVL). Topologically, residues 136-138 (KEF) are lumenal. A disulfide bridge links Cys-139 with Cys-142. A helical transmembrane segment spans residues 139–160 (CIICIVTYVLNFLLLIINYKRL). 2 residues coordinate phylloquinone: Cys-142 and Tyr-146. Tyr-146 serves as a coordination point for (S)-warfarin. Over 161–176 (VYLNEAWKRQLQPKQD) the chain is Cytoplasmic.

The protein belongs to the VKOR family.

It is found in the endoplasmic reticulum membrane. It carries out the reaction phylloquinone + [protein]-disulfide + H2O = 2,3-epoxyphylloquinone + [protein]-dithiol. The enzyme catalyses phylloquinol + [protein]-disulfide = phylloquinone + [protein]-dithiol. With respect to regulation, inhibited by warfarin (coumadin). Warfarin locks VKORC1 in both redox states into the closed conformation. Its function is as follows. Involved in vitamin K metabolism. Can reduce inactive vitamin K 2,3-epoxide to active vitamin K, and may contribute to vitamin K-mediated protection against oxidative stress. Plays a role in vitamin K-dependent gamma-carboxylation of Glu residues in target proteins. In Homo sapiens (Human), this protein is Vitamin K epoxide reductase complex subunit 1-like protein 1 (VKORC1L1).